Here is a 338-residue protein sequence, read N- to C-terminus: P2Y purinoceptor 14 (338 aa).

Residues 1 to 29 (MINSTSTQPPDESCSQNLLITQQIIPVLY) are Extracellular-facing. Asparagine 3 carries N-linked (GlcNAc...) asparagine glycosylation. Residues 30–50 (CMVFIAGILLNGVSGWIFFYV) traverse the membrane as a helical segment. The Cytoplasmic portion of the chain corresponds to 51–55 (PSSKS). Residues 56–76 (FIIYLKNIVIADFVMSLTFPF) form a helical membrane-spanning segment. Residues 77 to 96 (KILGDSGLGPWQLNVFVCRV) are Extracellular-facing. A disulfide bridge connects residues cysteine 94 and cysteine 172. A helical membrane pass occupies residues 97–117 (SAVLFYVNMYVSIVFFGLISF). Residues 118–139 (DRYYKIVKPLWTSFIQSVSYSK) lie on the Cytoplasmic side of the membrane. The chain crosses the membrane as a helical span at residues 140–160 (LLSVIVWMLMLLLAVPNIILT). Residue asparagine 161 is glycosylated (N-linked (GlcNAc...) asparagine). At 161–188 (NQSVREVTQIKCIELKSELGRKWHKASN) the chain is on the extracellular side. Residues 189–209 (YIFVAIFWIVFLLLIVFYTAI) traverse the membrane as a helical segment. Residues 210-234 (TKKIFKSHLKSSRNSTSVKKKSSRN) lie on the Cytoplasmic side of the membrane. A helical membrane pass occupies residues 235–255 (IFSIVFVFFVCFVPYHIARIP). The Extracellular segment spans residues 256 to 278 (YTKSQTEAHYSCQSKEILRYMKE). A helical membrane pass occupies residues 279–299 (FTLLLSAANVCLDPIIYFFLC). Residues 300–338 (QPFREILCKKLHIPLKAQNDLDISRIKRGNTTLESTDTL) lie on the Cytoplasmic side of the membrane.

Belongs to the G-protein coupled receptor 1 family. As to expression, highest expression in the placenta, adipose tissue, stomach and intestine, intermediate levels in the brain, spleen, lung and heart, lowest levels in the kidney.

It localises to the cell membrane. In terms of biological role, receptor for UDP-glucose and other UDP-sugar coupled to G-proteins. Not activated by ATP, ADP, UTP or ATP. The chain is P2Y purinoceptor 14 (P2RY14) from Homo sapiens (Human).